Consider the following 113-residue polypeptide: C-X-C motif chemokine 6 (113 aa).

The N-terminal stretch at 1 to 36 (MSLLPSRAARVPGPSSSLCALLALLLLTPPGPLVSA) is a signal peptide. 2 cysteine pairs are disulfide-bonded: Cys-48/Cys-74 and Cys-50/Cys-90.

The protein belongs to the intercrine alpha (chemokine CxC) family.

The protein resides in the secreted. Chemotactic for neutrophil granulocytes. Signals through binding and activation of its receptors (CXCR1 and CXCR2). In addition to its chemotactic and angiogenic properties, it has strong antibacterial activity against Gram-positive and Gram-negative bacteria (90-fold-higher when compared to CXCL5 and CXCL7). The protein is C-X-C motif chemokine 6 (CXCL6) of Equus caballus (Horse).